Consider the following 348-residue polypeptide: Zinc finger and SCAN domain-containing protein 16 (348 aa).

Positions 41–123 constitute an SCAN box domain; it reads RQHFRKLCYQ…TVLEDLEREL (83 aa). Disordered stretches follow at residues 160 to 184 and 205 to 226; these read PKKT…TKNE and RLNK…EGRS. Residues 163–184 are compositionally biased toward basic and acidic residues; that stretch reads TQLEQEAGKPQRNGDKTRTKNE. 4 consecutive C2H2-type zinc fingers follow at residues 236–258, 264–286, 292–314, and 320–342; these read YKCD…RRTH, YKCD…HRVH, YKCK…QRIH, and YECD…QRIH.

Belongs to the krueppel C2H2-type zinc-finger protein family.

The protein localises to the nucleus. Its function is as follows. May be involved in transcriptional regulation. This Homo sapiens (Human) protein is Zinc finger and SCAN domain-containing protein 16 (ZSCAN16).